The chain runs to 125 residues: Ly6/PLAUR domain-containing protein 2 (125 aa).

A signal peptide spans 1–22; sequence MRGTRLALLALVLAACGELAPA. One can recognise a UPAR/Ly6 domain in the interval 25-100; that stretch reads CYVCPEPTGV…VSCCNTELCN (76 aa). N46 carries N-linked (GlcNAc...) asparagine glycosylation. G103 is lipidated: GPI-anchor amidated glycine. A propeptide spans 104–125 (removed in mature form); that stretch reads APALNSLHCGALTLLPLLSLRL.

The protein localises to the cell membrane. This is Ly6/PLAUR domain-containing protein 2 (LYPD2) from Homo sapiens (Human).